The following is a 434-amino-acid chain: Adenylosuccinate synthetase (434 aa).

GTP-binding positions include 22 to 28 and 50 to 52; these read GDEGKGK and GHT. Catalysis depends on Asp23, which acts as the Proton acceptor. Mg(2+)-binding residues include Asp23 and Gly50. Residues 23 to 26, 48 to 51, Thr139, Arg153, Gln234, Thr249, and Arg313 contribute to the IMP site; these read DEGK and NAGH. The active-site Proton donor is the His51. Substrate is bound at residue 309-315; the sequence is ATTGRKR. Residues Arg315, 341–343, and 423–425 each bind GTP; these read KLD and SVG.

The protein belongs to the adenylosuccinate synthetase family. Homodimer. The cofactor is Mg(2+).

Its subcellular location is the cytoplasm. The enzyme catalyses IMP + L-aspartate + GTP = N(6)-(1,2-dicarboxyethyl)-AMP + GDP + phosphate + 2 H(+). Its pathway is purine metabolism; AMP biosynthesis via de novo pathway; AMP from IMP: step 1/2. Functionally, plays an important role in the de novo pathway of purine nucleotide biosynthesis. Catalyzes the first committed step in the biosynthesis of AMP from IMP. The protein is Adenylosuccinate synthetase of Pelodictyon phaeoclathratiforme (strain DSM 5477 / BU-1).